The chain runs to 421 residues: Serine/threonine-protein kinase OXI1 (421 aa).

One can recognise a Protein kinase domain in the interval 17–329 (LEVLSLLGRG…VEEIKGHDFF (313 aa)). ATP is bound by residues 23 to 31 (LGRGAKGVV) and Lys-45. The Proton acceptor role is filled by Asp-149. The segment at 167 to 246 (DFDLSTNLAP…VGTEEYVAPE (80 aa)) is activation loop. Ser-235 is subject to Phosphoserine; by PDPK1. The region spanning 330–421 (RGVDWEKVIL…LESDNNFLVF (92 aa)) is the AGC-kinase C-terminal domain. The short motif at 418-421 (FLVF) is the PIF element.

It belongs to the protein kinase superfamily. AGC Ser/Thr protein kinase family. In terms of assembly, interacts with PDK1 and PDK2. In terms of tissue distribution, expressed in roots and root hair cells.

The catalysed reaction is L-seryl-[protein] + ATP = O-phospho-L-seryl-[protein] + ADP + H(+). It carries out the reaction L-threonyl-[protein] + ATP = O-phospho-L-threonyl-[protein] + ADP + H(+). Activated in response to hydrogen peroxide and cellulase elicitor. Activated by PDK1 in a phosphatidic acid dependent manner. In terms of biological role, involved in oxidative burst-mediated signaling. Required for basal resistance to P.parasitica infection and root hair growth. Partly required for the activation of MPK3 and MPK6 by hydrogen peroxide and cellulase elicitor. In Arabidopsis thaliana (Mouse-ear cress), this protein is Serine/threonine-protein kinase OXI1.